The primary structure comprises 134 residues: Protein NrdI (134 aa).

Belongs to the NrdI family.

In terms of biological role, probably involved in ribonucleotide reductase function. The protein is Protein NrdI of Serratia proteamaculans (strain 568).